A 257-amino-acid chain; its full sequence is 5-oxoprolinase subunit A (257 aa).

The protein belongs to the LamB/PxpA family. In terms of assembly, forms a complex composed of PxpA, PxpB and PxpC.

It carries out the reaction 5-oxo-L-proline + ATP + 2 H2O = L-glutamate + ADP + phosphate + H(+). Catalyzes the cleavage of 5-oxoproline to form L-glutamate coupled to the hydrolysis of ATP to ADP and inorganic phosphate. In Fusobacterium nucleatum subsp. nucleatum (strain ATCC 25586 / DSM 15643 / BCRC 10681 / CIP 101130 / JCM 8532 / KCTC 2640 / LMG 13131 / VPI 4355), this protein is 5-oxoprolinase subunit A.